A 711-amino-acid chain; its full sequence is Polyribonucleotide nucleotidyltransferase (711 aa).

The Mg(2+) site is built by Asp486 and Asp492. The region spanning 553-612 (PRIHTIKINPDKIKDVIGKGGSVIRALTEETGTTIEIEDDGTVKIAATDGEKAKHAIRRI) is the KH domain. The region spanning 622–690 (GRVYTGKVTR…RQGRIRLSIK (69 aa)) is the S1 motif domain. Residues 689–711 (IKEATEQSQPAAAPEAPAAEQGE) form a disordered region. Residues 694–711 (EQSQPAAAPEAPAAEQGE) are compositionally biased toward low complexity.

It belongs to the polyribonucleotide nucleotidyltransferase family. As to quaternary structure, component of the RNA degradosome, which is a multiprotein complex involved in RNA processing and mRNA degradation. The cofactor is Mg(2+).

Its subcellular location is the cytoplasm. It catalyses the reaction RNA(n+1) + phosphate = RNA(n) + a ribonucleoside 5'-diphosphate. In terms of biological role, involved in mRNA degradation. Catalyzes the phosphorolysis of single-stranded polyribonucleotides processively in the 3'- to 5'-direction. In Shigella flexneri serotype 5b (strain 8401), this protein is Polyribonucleotide nucleotidyltransferase.